Here is an 86-residue protein sequence, read N- to C-terminus: Putative pro-MCH-like protein 1 (86 aa).

Residues Gly31 to Glu49 form an NGE-like region. The interval Glu38 to Phe62 is disordered. The segment at Glu52–Val64 is NEI-like. The segment at Asp68 to Val86 is melanin-concentrating hormone-like.

Belongs to the melanin-concentrating hormone family. As to expression, expressed in testis and brain.

The chain is Putative pro-MCH-like protein 1 (PMCHL1) from Homo sapiens (Human).